Here is a 414-residue protein sequence, read N- to C-terminus: 3-ketoacyl-CoA thiolase, peroxisomal (414 aa).

The transit peptide at 1–9 directs the protein to the peroxisome; that stretch reads MDRLNNLAT. The interval 1–9 is PTS2-type peroxisomal targeting signal; sequence MDRLNNLAT. Catalysis depends on cysteine 115, which acts as the Acyl-thioester intermediate. Residues histidine 370 and cysteine 400 each act as proton acceptor in the active site.

Belongs to the thiolase-like superfamily. Thiolase family. As to quaternary structure, homodimer. Interacts (via PTS2-type peroxisomal targeting signal region) with PEX7; leading to its translocation into peroxisomes.

The protein localises to the peroxisome. It carries out the reaction an acyl-CoA + acetyl-CoA = a 3-oxoacyl-CoA + CoA. It participates in lipid metabolism; fatty acid metabolism. In terms of biological role, responsible for the thiolytic cleavage of straight chain 3-keto fatty acyl-CoAs (3-oxoacyl-CoAs). The polypeptide is 3-ketoacyl-CoA thiolase, peroxisomal (POT1) (Yarrowia lipolytica (strain CLIB 122 / E 150) (Yeast)).